The primary structure comprises 130 residues: Small ribosomal subunit protein uS9 (130 aa).

Belongs to the universal ribosomal protein uS9 family.

The chain is Small ribosomal subunit protein uS9 from Yersinia enterocolitica serotype O:8 / biotype 1B (strain NCTC 13174 / 8081).